A 567-amino-acid chain; its full sequence is UPF0313 protein Tpet_0582 (567 aa).

The Radical SAM core domain maps to 288 to 560 (KAIETVKFSI…NKMKENVLFK (273 aa)). The [4Fe-4S] cluster site is built by cysteine 303, cysteine 307, and cysteine 310.

Belongs to the UPF0313 family. Requires [4Fe-4S] cluster as cofactor.

This is UPF0313 protein Tpet_0582 from Thermotoga petrophila (strain ATCC BAA-488 / DSM 13995 / JCM 10881 / RKU-1).